Consider the following 349-residue polypeptide: Isopentenyl-diphosphate delta-isomerase (349 aa).

Substrate is bound at residue 6–7; it reads RK. Residues 62-64, serine 93, and asparagine 122 each bind FMN; that span reads AMT. Substrate is bound at residue glutamine 152. Glutamate 153 serves as a coordination point for Mg(2+). FMN contacts are provided by residues lysine 184, threonine 214, 258–259, and 280–281; these read GG and AG.

This sequence belongs to the IPP isomerase type 2 family. As to quaternary structure, homooctamer. Dimer of tetramers. The cofactor is FMN. NADPH serves as cofactor. It depends on Mg(2+) as a cofactor.

It localises to the cytoplasm. It carries out the reaction isopentenyl diphosphate = dimethylallyl diphosphate. Involved in the biosynthesis of isoprenoids. Catalyzes the 1,3-allylic rearrangement of the homoallylic substrate isopentenyl (IPP) to its allylic isomer, dimethylallyl diphosphate (DMAPP). This is Isopentenyl-diphosphate delta-isomerase from Bacillus licheniformis (strain ATCC 14580 / DSM 13 / JCM 2505 / CCUG 7422 / NBRC 12200 / NCIMB 9375 / NCTC 10341 / NRRL NRS-1264 / Gibson 46).